The primary structure comprises 310 residues: MLDKRIVDVRLDQLEILKAKNGKEHFEKQYTMGNLLGSGGFGSVYSGHRISDGQKVAIKQISRDRIQQWSKMPGEVNPVPNEIALLQSLGGGSGSVPGHRGIIRMLDWFEIPGQEYLIVFEKPQHCQDLFDFITERGALDESLARRFLKQVIEAVQFCHSKGIVHRDIKDENILVDTRTGDIKVIDFGSGATLKDSMYTDFEGTRVYSPPEWILYHKYHALPLTVWSLGVLLYDMVCGDIPFEQDTDIVKAKPSFNKRISNDCRSLICSCLSYNPGDRPSLEQILQHPWMMESSVDNGDLQEESKIKPSL.

Residues 30-290 (YTMGNLLGSG…LEQILQHPWM (261 aa)) enclose the Protein kinase domain. Residues 36–44 (LGSGGFGSV) and Lys59 contribute to the ATP site. The active-site Proton acceptor is Asp167.

Belongs to the protein kinase superfamily. CAMK Ser/Thr protein kinase family. PIM subfamily. In terms of processing, autophosphorylated.

It catalyses the reaction L-seryl-[protein] + ATP = O-phospho-L-seryl-[protein] + ADP + H(+). It carries out the reaction L-threonyl-[protein] + ATP = O-phospho-L-threonyl-[protein] + ADP + H(+). Its function is as follows. Proto-oncogene with serine/threonine kinase activity involved in cell survival and cell proliferation. The protein is Serine/threonine-protein kinase pim-2 (pim2) of Danio rerio (Zebrafish).